The sequence spans 78 residues: Broad mercury transporter MerE (78 aa).

A run of 2 helical transmembrane segments spans residues 19–39 (LWGA…AAVL) and 47–67 (FLGE…VLAV).

The protein localises to the cell inner membrane. In terms of biological role, broad mercury transporter that mediates the transport of both CH(3)Hg(I) and Hg(II) across the membrane. The polypeptide is Broad mercury transporter MerE (Shigella flexneri).